A 126-amino-acid chain; its full sequence is C-type natriuretic peptide (126 aa).

An N-terminal signal peptide occupies residues 1–23 (MHLSQLLACALLLSLLSLRPSEA). Positions 20 to 71 (PSEAKPGAPPKVPRTPPGEEVAEPQAAGGGQKKGDKTPGGGGANLKDDRSRL) are disordered. The propeptide occupies 24–73 (KPGAPPKVPRTPPGEEVAEPQAAGGGQKKGDKTPGGGGANLKDDRSRLLR). Pro residues predominate over residues 26–35 (GAPPKVPRTP). The segment covering 46 to 62 (AGGGQKKGDKTPGGGGA) has biased composition (gly residues). Cys110 and Cys126 are disulfide-bonded.

This sequence belongs to the natriuretic peptide family. Degraded by IDE (in vitro).

Its subcellular location is the secreted. Its function is as follows. Hormone which plays a role in endochondral ossification through regulation of cartilaginous growth plate chondrocytes proliferation and differentiation. May also be vasoactive and natriuretic. Acts by specifically binding and stimulating NPR2 to produce cGMP. Binds the clearance receptor NPR3. This is C-type natriuretic peptide (NPPC) from Ovis aries (Sheep).